The sequence spans 377 residues: Molybdenum import ATP-binding protein ModC (377 aa).

The ABC transporter domain maps to 4–240 (IAPRSIRGEF…PALPLATARD (237 aa)). 38–45 (GPSGCGKS) lines the ATP pocket. In terms of domain architecture, Mop spans 299–369 (RTSILNILPA…IKGVALAPER (71 aa)).

This sequence belongs to the ABC transporter superfamily. Molybdate importer (TC 3.A.1.8) family. The complex is composed of two ATP-binding proteins (ModC), two transmembrane proteins (ModB) and a solute-binding protein (ModA).

It localises to the cell inner membrane. The catalysed reaction is molybdate(out) + ATP + H2O = molybdate(in) + ADP + phosphate + H(+). Part of the ABC transporter complex ModABC involved in molybdenum import. Responsible for energy coupling to the transport system. In Rhodopseudomonas palustris (strain HaA2), this protein is Molybdenum import ATP-binding protein ModC.